The sequence spans 475 residues: Eukaryotic translation initiation factor 3 subunit L (475 aa).

Residues 257-451 enclose the PCI domain; the sequence is DAIRMFSHIL…DLDYAMQGDL (195 aa).

The protein belongs to the eIF-3 subunit L family. As to quaternary structure, component of the eukaryotic translation initiation factor 3 (eIF-3) complex.

It is found in the cytoplasm. Its function is as follows. Component of the eukaryotic translation initiation factor 3 (eIF-3) complex, which is involved in protein synthesis of a specialized repertoire of mRNAs and, together with other initiation factors, stimulates binding of mRNA and methionyl-tRNAi to the 40S ribosome. The eIF-3 complex specifically targets and initiates translation of a subset of mRNAs involved in cell proliferation. The chain is Eukaryotic translation initiation factor 3 subunit L from Sclerotinia sclerotiorum (strain ATCC 18683 / 1980 / Ss-1) (White mold).